A 180-amino-acid polypeptide reads, in one-letter code: Acireductone dioxygenase (180 aa).

His-97, His-99, Glu-103, and His-141 together coordinate Fe(2+). Residues His-97, His-99, Glu-103, and His-141 each contribute to the Ni(2+) site.

The protein belongs to the acireductone dioxygenase (ARD) family. As to quaternary structure, monomer. The cofactor is Fe(2+). It depends on Mg(2+) as a cofactor. Requires Ni(2+) as cofactor. Mn(2+) is required as a cofactor. Co(2+) serves as cofactor.

It carries out the reaction 1,2-dihydroxy-5-(methylsulfanyl)pent-1-en-3-one + O2 = 3-(methylsulfanyl)propanoate + CO + formate + 2 H(+). The catalysed reaction is 1,2-dihydroxy-5-(methylsulfanyl)pent-1-en-3-one + O2 = 4-methylsulfanyl-2-oxobutanoate + formate + 2 H(+). Its pathway is amino-acid biosynthesis; L-methionine biosynthesis via salvage pathway; L-methionine from S-methyl-5-thio-alpha-D-ribose 1-phosphate: step 5/6. Its function is as follows. Catalyzes 2 different reactions between oxygen and the acireductone 1,2-dihydroxy-3-keto-5-methylthiopentene (DHK-MTPene) depending upon the metal bound in the active site. Fe-containing acireductone dioxygenase (Fe-ARD) produces formate and 2-keto-4-methylthiobutyrate (KMTB), the alpha-ketoacid precursor of methionine in the methionine recycle pathway. Ni-containing acireductone dioxygenase (Ni-ARD) produces methylthiopropionate, carbon monoxide and formate, and does not lie on the methionine recycle pathway. The sequence is that of Acireductone dioxygenase (mtnD) from Klebsiella oxytoca.